Reading from the N-terminus, the 284-residue chain is Bifunctional protein FolD (284 aa).

Residues 165 to 167, Ser190, and Val231 contribute to the NADP(+) site; that span reads GRS.

The protein belongs to the tetrahydrofolate dehydrogenase/cyclohydrolase family. In terms of assembly, homodimer.

It carries out the reaction (6R)-5,10-methylene-5,6,7,8-tetrahydrofolate + NADP(+) = (6R)-5,10-methenyltetrahydrofolate + NADPH. The enzyme catalyses (6R)-5,10-methenyltetrahydrofolate + H2O = (6R)-10-formyltetrahydrofolate + H(+). The protein operates within one-carbon metabolism; tetrahydrofolate interconversion. Catalyzes the oxidation of 5,10-methylenetetrahydrofolate to 5,10-methenyltetrahydrofolate and then the hydrolysis of 5,10-methenyltetrahydrofolate to 10-formyltetrahydrofolate. The sequence is that of Bifunctional protein FolD from Ruminiclostridium cellulolyticum (strain ATCC 35319 / DSM 5812 / JCM 6584 / H10) (Clostridium cellulolyticum).